Reading from the N-terminus, the 83-residue chain is Arminin 4364 (83 aa).

The signal sequence occupies residues 1-18 (MKTVFAILFLAFIALTYA). The propeptide occupies 19–55 (RSYEDVKEEIKNEVEKEILEDLEKETDELNERKINDA). V80 bears the Valine amide mark.

Belongs to the arminin family. In terms of tissue distribution, expressed in entodermal epithelium along the body column.

It is found in the secreted. It localises to the target cell membrane. Antimicrobial peptide with a broad-spectrum antimicrobial activity. Keeps its antibacterial activity under a wide range of salt concentrations that mimic physiological conditions of human blood, which is surprising, since Hydra is an obligate freshwater animal with nearly no salt tolerance. Does not affect red blood cells. In Hydra vulgaris (Hydra), this protein is Arminin 4364.